The primary structure comprises 168 residues: Protein GRIM REAPER (168 aa).

A signal peptide spans 1–30; it reads MVIKIPNTFIKATSLLSLILYFLIIATSKS. The N-linked (GlcNAc...) asparagine glycan is linked to N59.

This sequence belongs to the STIG1 family. In terms of assembly, interacts with PRK5 and to a lower extent with PRK4. In terms of tissue distribution, highly expressed in flowers, and at very low levels in leaves.

The protein localises to the secreted. Its subcellular location is the extracellular space. It is found in the apoplast. In terms of biological role, involved in the regulation of cell death induced by extracellular reactive oxygen species. Only the processed peptide, and not the full length GRI can bind in vivo to the extracellular domain of the receptor PRK5. The GRIp-induced cell death is superoxide and salicylic acid dependent. This is Protein GRIM REAPER from Arabidopsis thaliana (Mouse-ear cress).